The primary structure comprises 239 residues: Glycerol-3-phosphate acyltransferase (239 aa).

The next 6 membrane-spanning stretches (helical) occupy residues 6–26 (AIALLIVFSLVIGYLMGSVMF), 61–81 (FLVGLCDALKGFLAFVFSFLI), 99–119 (YYLTYLSCFAATIGHIFPLYF), 135–155 (LAISLWWFVICLVLWLLVTLI), 159–179 (VSLASLVTFFILAIIILVPWL), and 199–219 (WYIILFFVLWYWPLTIAVFWL).

This sequence belongs to the PlsY family. Probably interacts with PlsX.

It is found in the cell membrane. The enzyme catalyses an acyl phosphate + sn-glycerol 3-phosphate = a 1-acyl-sn-glycero-3-phosphate + phosphate. It participates in lipid metabolism; phospholipid metabolism. In terms of biological role, catalyzes the transfer of an acyl group from acyl-phosphate (acyl-PO(4)) to glycerol-3-phosphate (G3P) to form lysophosphatidic acid (LPA). This enzyme utilizes acyl-phosphate as fatty acyl donor, but not acyl-CoA or acyl-ACP. This chain is Glycerol-3-phosphate acyltransferase, found in Mycoplasma pneumoniae (strain ATCC 29342 / M129 / Subtype 1) (Mycoplasmoides pneumoniae).